A 255-amino-acid chain; its full sequence is Small ribosomal subunit protein uS2 (255 aa).

The protein belongs to the universal ribosomal protein uS2 family.

The protein is Small ribosomal subunit protein uS2 (rpsB) of Streptococcus pyogenes serotype M1.